The chain runs to 61 residues: MPFVTIQFLEGRTDDQKKALVSEVTEVVSKNLKAPKENIHVILEEMKKTDYGVGGVRKSDI.

Pro2 acts as the Proton acceptor; via imino nitrogen in catalysis.

The protein belongs to the 4-oxalocrotonate tautomerase family.

This is Probable tautomerase lmo2564 from Listeria monocytogenes serovar 1/2a (strain ATCC BAA-679 / EGD-e).